The chain runs to 180 residues: Segregation and condensation protein B (180 aa).

This sequence belongs to the ScpB family. Homodimer. Homodimerization may be required to stabilize the binding of ScpA to the Smc head domains. Component of a cohesin-like complex composed of ScpA, ScpB and the Smc homodimer, in which ScpA and ScpB bind to the head domain of Smc. The presence of the three proteins is required for the association of the complex with DNA.

It is found in the cytoplasm. In terms of biological role, participates in chromosomal partition during cell division. May act via the formation of a condensin-like complex containing Smc and ScpA that pull DNA away from mid-cell into both cell halves. The sequence is that of Segregation and condensation protein B from Staphylococcus aureus (strain Mu3 / ATCC 700698).